Consider the following 509-residue polypeptide: UDP-N-acetylmuramoyl-L-alanyl-D-glutamate--2,6-diaminopimelate ligase (509 aa).

Position 32 (Ser32) interacts with UDP-N-acetyl-alpha-D-muramoyl-L-alanyl-D-glutamate. An ATP-binding site is contributed by 117–123 (GTNGKTT). UDP-N-acetyl-alpha-D-muramoyl-L-alanyl-D-glutamate contacts are provided by residues 159–160 (TT), Ser186, Gln192, and Arg194. An N6-carboxylysine modification is found at Lys226. Residues Arg401, 425-428 (DNPR), Gly476, and Glu480 each bind meso-2,6-diaminopimelate. The short motif at 425–428 (DNPR) is the Meso-diaminopimelate recognition motif element.

This sequence belongs to the MurCDEF family. MurE subfamily. Mg(2+) is required as a cofactor. Carboxylation is probably crucial for Mg(2+) binding and, consequently, for the gamma-phosphate positioning of ATP.

The protein resides in the cytoplasm. It carries out the reaction UDP-N-acetyl-alpha-D-muramoyl-L-alanyl-D-glutamate + meso-2,6-diaminopimelate + ATP = UDP-N-acetyl-alpha-D-muramoyl-L-alanyl-gamma-D-glutamyl-meso-2,6-diaminopimelate + ADP + phosphate + H(+). The protein operates within cell wall biogenesis; peptidoglycan biosynthesis. Catalyzes the addition of meso-diaminopimelic acid to the nucleotide precursor UDP-N-acetylmuramoyl-L-alanyl-D-glutamate (UMAG) in the biosynthesis of bacterial cell-wall peptidoglycan. The sequence is that of UDP-N-acetylmuramoyl-L-alanyl-D-glutamate--2,6-diaminopimelate ligase from Prochlorococcus marinus (strain NATL2A).